The chain runs to 89 residues: Small ribosomal subunit protein uS17 (89 aa).

Belongs to the universal ribosomal protein uS17 family. Part of the 30S ribosomal subunit.

Functionally, one of the primary rRNA binding proteins, it binds specifically to the 5'-end of 16S ribosomal RNA. The sequence is that of Small ribosomal subunit protein uS17 from Paracidovorax citrulli (strain AAC00-1) (Acidovorax citrulli).